The sequence spans 165 residues: Ubiquitin-like protein 4B (165 aa).

Positions 1-76 (MFLTVKLLLG…ISVVVRPLEK (76 aa)) constitute a Ubiquitin-like domain. The disordered stretch occupies residues 139-165 (EPLAQPTGEREPEVLSPNKEEEKEAVQ). Residues 146–165 (GEREPEVLSPNKEEEKEAVQ) are compositionally biased toward basic and acidic residues.

It localises to the cytoplasm. This Bos taurus (Bovine) protein is Ubiquitin-like protein 4B (UBL4B).